The chain runs to 259 residues: 14-3-3-like protein (259 aa).

It belongs to the 14-3-3 family.

The chain is 14-3-3-like protein from Helianthus annuus (Common sunflower).